We begin with the raw amino-acid sequence, 431 residues long: MKNWRTLILGLALSASTAFAAPQVVDKVAAVVDNSVVLESDVNSLLQSVKLNAQQAGQQLPDDATLRHQITDRLIMDNIILQMAQKMGIQVTDEQLDQAITNIAAQNRMSIDQLKSQLANEGLNYNTYRSQIRKEMLISEVRNNEVRRRVTVLPQEVDTLAKQIANQTGENDELNLSHILLPLPENPTQQQVDEAENLATSLVKQISEGADFGKLAITYSSDSQALKGGQMGWGKLQEIPTLFAERLTQVQKGQVVGPIRSGVGFHILKVNDIRGGNKSVSVTETHARHILIKPSVVMTDSQAQAKLADVAQQIKNGSTDFAAQAKLLSQDPGSANQGGDLGWASPDMYDPAFRDALLKLKKGEISQPIHSSFGWHLIQLLDTRQVDKTDAAQKEQAYRMIFNRKFAEEAQTWMQEQRAAAYVKVINGATN.

An N-terminal signal peptide occupies residues 1 to 20 (MKNWRTLILGLALSASTAFA). 2 consecutive PpiC domains span residues 171 to 272 (NDEL…KVND) and 282 to 382 (VTET…QLLD).

It localises to the periplasm. The catalysed reaction is [protein]-peptidylproline (omega=180) = [protein]-peptidylproline (omega=0). Functionally, chaperone involved in the correct folding and assembly of outer membrane proteins. Recognizes specific patterns of aromatic residues and the orientation of their side chains, which are found more frequently in integral outer membrane proteins. May act in both early periplasmic and late outer membrane-associated steps of protein maturation. The sequence is that of Chaperone SurA from Pectobacterium atrosepticum (strain SCRI 1043 / ATCC BAA-672) (Erwinia carotovora subsp. atroseptica).